We begin with the raw amino-acid sequence, 730 residues long: Catalase-peroxidase 1 (730 aa).

Positions 1 to 24 (MQEKGKCPVTGMTKHKTSGGTTNQ) are disordered. The segment at residues 95 to 218 (WHSAGTYRMG…LAAVQMGLIY (124 aa)) is a cross-link (tryptophyl-tyrosyl-methioninium (Trp-Tyr) (with M-244)). The active-site Proton acceptor is the His-96. A cross-link (tryptophyl-tyrosyl-methioninium (Tyr-Met) (with W-95)) is located at residues 218–244 (YVNPEGPNGQPSALASGKDIRDTFARM). A heme b-binding site is contributed by His-259.

This sequence belongs to the peroxidase family. Peroxidase/catalase subfamily. Homodimer or homotetramer. The cofactor is heme b. In terms of processing, formation of the three residue Trp-Tyr-Met cross-link is important for the catalase, but not the peroxidase activity of the enzyme.

It catalyses the reaction H2O2 + AH2 = A + 2 H2O. It carries out the reaction 2 H2O2 = O2 + 2 H2O. Bifunctional enzyme with both catalase and broad-spectrum peroxidase activity. The protein is Catalase-peroxidase 1 of Alkaliphilus metalliredigens (strain QYMF).